A 2726-amino-acid polypeptide reads, in one-letter code: MMNNSNYSDASGLGLLDEADEMPSTEKDLAEDAPWKKIQQNTFTRWCNEHLKCVGKRLTDLQRDLSDGLRLIALLEVLSQKRMYRKFHPRPNFRQMKLENVSVALEFLEREHIKLVSIDSKAIVDGNLKLILGLIWTLILHYSISMPMWEDEDDEDARKQTPKQRLLGWIQNKVPQLPITNFNRDWQDGKALGALVDNCAPGLCPDWEAWDPNQPVQNAREAMQQADDWLGVPQVIAPEEIVDPNVDEHSVMTYLSQFPKAKLKPGAPVRSKQLNPKKAIAYGPGIEPQGNTVLQPAHFTVQTVDAGVGEVLVYIEDPEGHTEEAKVVPNNDKDRTYAVSYVPKVAGLHKVTVLFAGQNIERSPFEVNVGMALGDANKVSARGPGLEPVGNVANKPTYFDIYTAGAGTGDVAVVIVDPQGRRDTVEVALEDKGDNTFRCTYRPVMEGPHTVHVAFAGAPITRSPFPVHVAEACNPNACRASGRGLQPKGVRVKEVADFKVFTKGAGSGELKVTVKGPKGTEEPVKVREAGDGVFECEYYPVIPGKYVVTITWGGYAIPRSPFEVQVSPEAGAQKVRAWGPGLETGQVGKSADFVVEAIGTEVGTLGFSIEGPSQAKIECDDRGDGSCDVRYWPTEPGEYAVHVICDDEDIRDSPFIAHIQPAPPDCFPDKVKAFGPGLEPTGCIVDRPAEFTIDARAAGKGDLKLYAQDADGCPIDIKVIPNGDGTFRCSYVPTKPIKHTVIISWGGVNVPKSPFRVNVGEGSHPERVKVYGPGVEKTGLKANEPTYFTVDCSEAGQGDVSIGIKCAPGVVGPAEADIDFDIIKNDNDTFTVKYTPPGAGHYTIMVLFANQEIPASPFHIKVDPSHDASKVKAEGPGLSRTGVEVGKPTHFTVLTKGAGKAKLDVHFAGAAKGEAVRDFEIIDNHDYSYTVKYTAVQQGNMAVTVTYGGDPVPKSPFVVNVAPPLDLSKVKVQGLNSKVAVGEEQAFLVNTRGAGGQGQLDVRMTSPSRRPIPCKLEPGSGAEAQAVRYMPPEEGPYKVDITYDGHPVPGSPFAVEGVLPPDPSKVCAYGPGLKGGLVGTPAPFSIDTKGAGTGGLGLTVEGPCEAKIECQDNGDGSCAVSYLPTEPGEYTINILFAEAHIPGSPFKATIQPVFDPSKVRASGPGLERGKAGEAATFTVDCSEAGEAELTIEILSDAGVKAEVLIHNNADGTYHITYSPAFPGTYTITIKYGGHPIPKFPTRVHVQPAVDTSGIKVSGPGVEPHGVLREVTTEFTVDARSLTATGGNHVTARVLNPSGAKTDTYVTDNGDGTYRVQYTAYEEGVHLVEVLYDEVAVPKSPFRVGVTEGCDPTRVRAFGPGLEGGLVNKANRFTVETRGAGTGGLGLAIEGPSEAKMSCKDNKDGSCTVEYVPFTPGDYDVNITFGGQPIPGSPFRVPVKDVVDPGKVKCSGPGLGTGVRARVPQTFTVDCSQAGRAPLQVAVLGPTGVAEPVEVRDNGDGTHTVHYTPATDGPYTVAVKYADQEVPRSPFKIKVLPAHDASKVRASGPGLNASGIPASLPVEFTIDARDAGEGLLTVQILDPEGKPKKANIRDNGDGTYTVSYLPDMSGRYTITIKYGGDEIPYSPFRIHALPTGDASKCLVTVSIGGHGLGACLGPRIQIGEETVITVDAKAAGKGKVTCTVSTPDGAELDVDVVENHDGTFDIYYTAPEPGKYVITIRFGGEHIPNSPFHVLACDPLPHVEEPAEVLQLHQPYAPLRPGTCPTHWATEEPVVPVEPLESMLRPFNLVIPFTVQKGELTGEVRMPSGKTARPNITDNKDGTITVRYAPTEKGLHQMGIKYDGNHIPGSPLQFYVDAINSGHVSAYGPGLSHGMVNKPATFTIVTKDAGEGGLSLAVEGPSKAEITCKDNKDGTCTVSYLPTAPGDYSIIVRFDDKHIPGSPFTAKITGDDSMRTSQLNVGTSTDVSLKITEGDLSQLTASIRAPSGNEEPCLLKRLPNRHIGISFTPKEVGEHVVSVRKSGKHVTNSPFKILVGPSEIGDASKVRVWGKGLSEGQTFQVAEFIVDTRNAGYGGLGLSIEGPSKVDINCEDMEDGTCKVTYCPTEPGTYIINIKFADKHVPGSPFTVKVTGEGRMKESITRRRQAPSIATIGSTCDLNLKIPGNWFQMVSAQERLTRTFTRSSHTYTRTERTEISKTRGGETKREVRVEESTQVGGDPFPAVFGDFLGRERLGSFGSITRQQEGEASSQDMTAQVTSPSGKTEAAEIVEGEDSAYSVRFVPQEMGPHTVAVKYRGQHVPGSPFQFTVGPLGEGGAHKVRAGGTGLERGVAGVPAEFSIWTREAGAGGLSIAVEGPSKAEIAFEDRKDGSCGVSYVVQEPGDYEVSIKFNDEHIPDSPFVVPVASLSDDARRLTVTSLQETGLKVNQPASFAVQLNGARGVIDARVHTPSGAVEECYVSELDSDKHTIRFIPHENGVHSIDVKFNGAHIPGSPFKIRVGEQSQAGDPGLVSAYGPGLEGGTTGVSSEFIVNTQNAGSGALSVTIDGPSKVQLDCRECPEGHVVTYTPMAPGNYLIAIKYGGPQHIVGSPFKAKVTGPRLSGGHSLHETSTVLVETVTKSSSSRGASYSSIPKFSSDASKVVTRGPGLSQAFVGQKNSFTVDCSKAGTNMMMVGVHGPKTPCEEVYVKHMGNRVYNVTYTVKEKGDYILIVKWGDESVPGSPFKVNVP.

The tract at residues 1–260 (MMNNSNYSDA…VMTYLSQFPK (260 aa)) is actin-binding. Serine 5 is modified (phosphoserine). Calponin-homology (CH) domains lie at 37–143 (KIQQ…LHYS) and 160–263 (QTPK…KAKL). Filamin repeat units follow at residues 271 to 369 (SKQL…EVNV), 371 to 469 (MALG…PVHV), 470 to 566 (AEAC…EVQV), 567 to 659 (SPEA…IAHI), 663 to 759 (PPDC…RVNV), 760 to 862 (GEGS…HIKV), 863 to 961 (DPSH…VVNV), 962 to 1057 (APPL…AVEG), 1058 to 1150 (VLPP…KATI), 1151 to 1245 (QPVF…RVHV), 1246 to 1345 (QPAV…RVGV), 1346 to 1438 (TEGC…RVPV), 1439 to 1534 (KDVV…KIKV), 1535 to 1631 (LPAH…RIHA), and 1636 to 1735 (DASK…HVLA). Arginine 1003 bears the Omega-N-methylarginine mark. Serine 1162 and serine 1339 each carry phosphoserine. A hinge 1 region spans residues 1736 to 1759 (CDPLPHVEEPAEVLQLHQPYAPLR). Filamin repeat units follow at residues 1760–1854 (PGTC…LQFY), 1855–1947 (VDAI…TAKI), 1948–2034 (TGDD…KILV), and 2037–2129 (SEIG…TVKV). Serine 2043 carries the post-translational modification Phosphoserine. The segment at 2163–2244 (GNWFQMVSAQ…FGSITRQQEG (82 aa)) is intradomain insert; mediate targeting to Z lines. The span at 2194–2210 (ISKTRGGETKREVRVEE) shows a compositional bias: basic and acidic residues. The interval 2194–2214 (ISKTRGGETKREVRVEESTQV) is disordered. Serine 2234 and serine 2237 each carry phosphoserine. Position 2239 is a phosphothreonine (threonine 2239). Residues 2241–2260 (QQEGEASSQDMTAQVTSPSG) show a composition bias toward polar residues. The tract at residues 2241–2261 (QQEGEASSQDMTAQVTSPSGK) is disordered. The Filamin 20; mediates interaction with XIRP1 repeat unit spans residues 2245 to 2307 (EASSQDMTAQ…VPGSPFQFTV (63 aa)). 3 Filamin repeats span residues 2310 to 2402 (LGEG…VVPV), 2404 to 2497 (SLSD…KIRV), and 2501 to 2593 (SQAG…KAKV). An interaction with INPPL1 region spans residues 2404-2725 (SLSDDARRLT…VPGSPFKVNV (322 aa)). 6 positions are modified to phosphoserine: serine 2587, serine 2618, serine 2621, serine 2633, serine 2715, and serine 2719. Residues 2594-2630 (TGPRLSGGHSLHETSTVLVETVTKSSSSRGASYSSIP) form a hinge 2 region. Positions 2594 to 2726 (TGPRLSGGHS…PGSPFKVNVP (133 aa)) are self-association site, tail. A Filamin 24 repeat occupies 2631-2725 (KFSSDASKVV…VPGSPFKVNV (95 aa)).

The protein belongs to the filamin family. Homodimer; the filamin repeat 24 and the second hinge domain are important for dimer formation. Interacts with FLNB, KCND2, INPPL1, ITGB1A, MYOT, MYOZ1 and MYOZ3. Interacts with sarcoglycans SGCD and SGCG. Interacts (via filament repeats 17-18, 20-21 and 24) with USP25 (isoform USP25m only). Interacts with FBLIM1. Interacts with KY. Interacts with IGFN1. Interacts with MICALL2. Interacts with XIRP1; this interaction is mediated by filamin 20 repeat. Interacts with ANK3. Interacts with SYNPO2. Post-translationally, ubiquitinated by FBXL22, leading to proteasomal degradation.

The protein resides in the cytoplasm. It localises to the membrane. It is found in the cytoskeleton. Its subcellular location is the myofibril. The protein localises to the sarcomere. The protein resides in the z line. Functionally, muscle-specific filamin, which plays a central role in sarcomere assembly and organization. Critical for normal myogenesis, it probably functions as a large actin-cross-linking protein with structural functions at the Z lines in muscle cells. May be involved in reorganizing the actin cytoskeleton in response to signaling events. The protein is Filamin-C (Flnc) of Rattus norvegicus (Rat).